The following is a 38-amino-acid chain: Conotoxin FVIA (38 aa).

Positions 1–12 are excised as a propeptide; the sequence is ILSLSLLDRSTR. Disulfide bonds link Cys-13–Cys-28, Cys-20–Cys-32, and Cys-27–Cys-37. Cys-37 is modified (cysteine amide).

This sequence belongs to the conotoxin O1 superfamily. Expressed by the venom duct.

It localises to the secreted. Its function is as follows. Omega-conotoxins act at presynaptic membranes, they bind and block voltage-gated calcium channels (Cav). This peptide reversibly and selectively inhibits Cav2.2/CACNA1B (IC(50)=11.5 nM) voltage-gated calcium channels. Channel time recovery after toxin exposure is short (about 50 seconds). In vivo, it effectively and dose-dependently reduces nociceptive behavior in the formalin test and in neuropathic pain models, and reduces mechanical and thermal allodynia in the tail nerve injury rat model. It also shows significant analgesic effects on writhing in mouse neurotransmitter- and cytokine-induced pain models, though it has no effect on acute thermal pain and interferon-gamma-induced pain. It also depresses blood pressure immediately after administration, but pressure recovers relatively quickly and completely. In Conus fulmen (Thunderbolt cone), this protein is Conotoxin FVIA.